The sequence spans 407 residues: Phospholipase A1-II 7 (407 aa).

Ser230 (acyl-ester intermediate) is an active-site residue. Catalysis depends on charge relay system residues Ser230, Asp299, and His336.

It belongs to the AB hydrolase superfamily. Lipase family.

The protein resides in the cytoplasm. Acylhydrolase that catalyzes the hydrolysis of phospholipids at the sn-1 position. The polypeptide is Phospholipase A1-II 7 (Oryza sativa subsp. indica (Rice)).